The sequence spans 147 residues: Nucleoside diphosphate kinase (147 aa).

ATP is bound by residues Lys9, Phe57, Arg85, Thr91, Arg102, and Asn112. Catalysis depends on His115, which acts as the Pros-phosphohistidine intermediate.

This sequence belongs to the NDK family. In terms of assembly, homotetramer. The cofactor is Mg(2+).

Its subcellular location is the cytoplasm. The catalysed reaction is a 2'-deoxyribonucleoside 5'-diphosphate + ATP = a 2'-deoxyribonucleoside 5'-triphosphate + ADP. It carries out the reaction a ribonucleoside 5'-diphosphate + ATP = a ribonucleoside 5'-triphosphate + ADP. In terms of biological role, major role in the synthesis of nucleoside triphosphates other than ATP. The ATP gamma phosphate is transferred to the NDP beta phosphate via a ping-pong mechanism, using a phosphorylated active-site intermediate. In Thermosipho africanus (strain TCF52B), this protein is Nucleoside diphosphate kinase.